The primary structure comprises 323 residues: uncharacterized protein (323 aa).

The segment at 1–21 is disordered; it reads MGSYYSTESTKSNESNETTNN. The N-myristoyl glycine; by host moiety is linked to residue G2.

This is an uncharacterized protein from Acanthamoeba polyphaga (Amoeba).